A 130-amino-acid polypeptide reads, in one-letter code: DNA-directed RNA polymerase subunit omega (130 aa).

Residues Thr-108–Glu-130 form a disordered region.

This sequence belongs to the RNA polymerase subunit omega family. The RNAP catalytic core consists of 2 alpha, 1 beta, 1 beta' and 1 omega subunit. When a sigma factor is associated with the core the holoenzyme is formed, which can initiate transcription.

It catalyses the reaction RNA(n) + a ribonucleoside 5'-triphosphate = RNA(n+1) + diphosphate. Its function is as follows. Promotes RNA polymerase assembly. Latches the N- and C-terminal regions of the beta' subunit thereby facilitating its interaction with the beta and alpha subunits. This is DNA-directed RNA polymerase subunit omega from Rhodopseudomonas palustris (strain ATCC BAA-98 / CGA009).